We begin with the raw amino-acid sequence, 269 residues long: UPF0354 protein YtpQ (269 aa).

It belongs to the UPF0354 family.

The polypeptide is UPF0354 protein YtpQ (ytpQ) (Bacillus subtilis (strain 168)).